The sequence spans 253 residues: 5'/3'-nucleotidase SurE (253 aa).

The a divalent metal cation site is built by aspartate 8, aspartate 9, serine 39, and asparagine 92.

It belongs to the SurE nucleotidase family. A divalent metal cation serves as cofactor.

Its subcellular location is the cytoplasm. The catalysed reaction is a ribonucleoside 5'-phosphate + H2O = a ribonucleoside + phosphate. It carries out the reaction a ribonucleoside 3'-phosphate + H2O = a ribonucleoside + phosphate. It catalyses the reaction [phosphate](n) + H2O = [phosphate](n-1) + phosphate + H(+). In terms of biological role, nucleotidase with a broad substrate specificity as it can dephosphorylate various ribo- and deoxyribonucleoside 5'-monophosphates and ribonucleoside 3'-monophosphates with highest affinity to 3'-AMP. Also hydrolyzes polyphosphate (exopolyphosphatase activity) with the preference for short-chain-length substrates (P20-25). Might be involved in the regulation of dNTP and NTP pools, and in the turnover of 3'-mononucleotides produced by numerous intracellular RNases (T1, T2, and F) during the degradation of various RNAs. This Enterobacter sp. (strain 638) protein is 5'/3'-nucleotidase SurE.